A 330-amino-acid chain; its full sequence is Putative [LysW]-L-2-aminoadipate/[LysW]-L-glutamate phosphate reductase (330 aa).

10–13 is a binding site for NADP(+); that stretch reads SGYI. Cysteine 142 is an active-site residue. Asparagine 297 contacts NADP(+).

It belongs to the NAGSA dehydrogenase family. Type 1 subfamily. LysY sub-subfamily.

The protein localises to the cytoplasm. The enzyme catalyses [amino-group carrier protein]-C-terminal-N-(1-carboxy-5-oxopentan-1-yl)-L-glutamine + phosphate + NADP(+) = [amino-group carrier protein]-C-terminal-N-(1-carboxy-5-phosphooxy-5-oxopentan-1-yl)-L-glutamine + NADPH + H(+). It catalyses the reaction [amino-group carrier protein]-C-terminal-gamma-(L-glutamyl-5-semialdehyde)-L-glutamate + phosphate + NADP(+) = [amino-group carrier protein]-C-terminal-gamma-(5-phospho-L-glutamyl)-L-glutamate + NADPH + H(+). It participates in amino-acid biosynthesis; L-lysine biosynthesis via AAA pathway; L-lysine from L-alpha-aminoadipate (Thermus route): step 3/5. Its pathway is amino-acid biosynthesis; L-arginine biosynthesis. Functionally, involved in both the arginine and lysine biosynthetic pathways. This is Putative [LysW]-L-2-aminoadipate/[LysW]-L-glutamate phosphate reductase from Pyrococcus horikoshii (strain ATCC 700860 / DSM 12428 / JCM 9974 / NBRC 100139 / OT-3).